The chain runs to 299 residues: Prohibitin-2 (299 aa).

At Ala-2 the chain carries N-acetylalanine. The segment at 19 to 49 (MGTALKLLLGAGAVAYGVRESVFTVEGGHRA) is necessary for transcriptional repression. Tyr-128 bears the Phosphotyrosine mark. Residue Lys-147 is modified to N6-acetyllysine. A necessary for transcriptional repression region spans residues 150-174 (ASQLITQRAQVSLLIRRELTERAKD). At Ser-151 the chain carries Phosphoserine. The stretch at 190 to 238 (SREYTAAVEAKQVAQQEAQRAQFLVEKAKQEQRQKIVQAEGEAEAAKML) forms a coiled coil. N6-acetyllysine is present on residues Lys-200, Lys-236, Lys-250, and Lys-262.

The protein belongs to the prohibitin family. The mitochondrial prohibitin complex consists of two subunits (PHB1 and PHB2), assembled into a membrane-associated ring-shaped supercomplex of approximately 1 mDa. Interacts with ESR1, HDAC1 and HDAC5. Interacts with ZNF703. Interacts with STOML2. Interacts with ARFGEF3. Interacts with SPHK2. Interacts with COX4I1; the interaction associates PHB2 with COX. Interacts with MAP1LC3B (membrane-bound form LC3-II); the interaction is direct and upon mitochondrial depolarization and proteasome-dependent outer membrane rupture. Interacts with IGFBP6 (via C-terminal domain). Interacts with CLPB. Interacts with CD86 (via cytoplasmic domain); the interactions increases after priming with CD40. Interacts with AFG3L2. Interacts with DNAJC19. Interacts with AKT2; this interaction may be important for myogenic differentiation. In terms of processing, phosphorylated. Tyrosine phosphorylation is indirectly stimulated by IGFBP6. As to expression, widely expressed in different tissues.

Its subcellular location is the mitochondrion inner membrane. The protein resides in the cytoplasm. The protein localises to the nucleus. It localises to the cell membrane. In terms of biological role, protein with pleiotropic attributes mediated in a cell-compartment- and tissue-specific manner, which include the plasma membrane-associated cell signaling functions, mitochondrial chaperone, and transcriptional co-regulator of transcription factors and sex steroid hormones in the nucleus. Its function is as follows. In the mitochondria, together with PHB, forms large ring complexes (prohibitin complexes) in the inner mitochondrial membrane (IMM) and functions as a chaperone protein that stabilizes mitochondrial respiratory enzymes and maintains mitochondrial integrity in the IMM, which is required for mitochondrial morphogenesis, neuronal survival, and normal lifespan. The prohibitin complex, with DNAJC19, regulates cardiolipin remodeling and the protein turnover of OMA1 in a cardiolipin-binding manner. Also regulates cytochrome-c oxidase assembly (COX) and mitochondrial respiration. Binding to sphingoid 1-phosphate (SPP) modulates its regulator activity. Has a key role of mitophagy receptor involved in targeting mitochondria for autophagic degradation. Involved in mitochondrial-mediated antiviral innate immunity, activates RIG-I-mediated signal transduction and production of IFNB1 and pro-inflammatory cytokine IL6. Functionally, in the nucleus, serves as transcriptional co-regulator. Acts as a mediator of transcriptional repression by nuclear hormone receptors via recruitment of histone deacetylases. Functions as an estrogen receptor (ER)-selective coregulator that potentiates the inhibitory activities of antiestrogens and represses the activity of estrogens. Competes with NCOA1 for modulation of ER transcriptional activity. In the plasma membrane, is involved in IGFBP6-induced cell migration. Cooperates with CD86 to mediate CD86-signaling in B lymphocytes that regulates the level of IgG1 produced through the activation of distal signaling intermediates. Upon CD40 engagement, required to activate NF-kappa-B signaling pathway via phospholipase C and protein kinase C activation. The chain is Prohibitin-2 from Mus musculus (Mouse).